Consider the following 233-residue polypeptide: Small ribosomal subunit protein uS2c (233 aa).

Belongs to the universal ribosomal protein uS2 family.

It is found in the plastid. Its subcellular location is the chloroplast. The protein is Small ribosomal subunit protein uS2c (rps2) of Galdieria sulphuraria (Red alga).